The chain runs to 385 residues: AA13 family lytic polysaccharide monooxygenase aasA (385 aa).

A signal peptide spans 1–18; sequence MKSLLALVAGNLVTAVSG. Residue His19 coordinates Cu(2+). At His19 the chain carries Methylhistidine. The N-terminal catalytic module stretch occupies residues 19–248; it reads HGYLTVPASR…AQVYLHCADI (230 aa). Intrachain disulfides connect Cys40/Cys43, Cys66/Cys245, Cys102/Cys203, Cys118/Cys145, Cys153/Cys161, Cys167/Cys173, and Cys181/Cys192. Residue His109 coordinates Cu(2+). The N-linked (GlcNAc...) asparagine glycan is linked to Asn120. Tyr242 is a Cu(2+) binding site. Residues 254–276 form a disordered region; sequence SGSSPSPTSTTSTATSTTTPSST. Over residues 256–276 the composition is skewed to low complexity; that stretch reads SSPSPTSTTSTATSTTTPSST. In terms of domain architecture, CBM20 spans 278–385; it reads CASAISIPVT…TTATESGAWR (108 aa). The N-linked (GlcNAc...) asparagine glycan is linked to Asn364.

Belongs to the polysaccharide monooxygenase AA13 family. The cofactor is Cu(2+). The catalytically essential N-terminal histidine His-19 is post-translationally modified by methylation to prevent protonation of the histidine side chain, and protect the critical active site of the enzyme from oxidative damage.

It is found in the secreted. The enzyme catalyses starch + reduced acceptor + O2 = D-glucono-1,5-lactone-terminated malto-oligosaccharides + short-chain malto-oligosaccharides + acceptor + H2O.. In terms of biological role, starch-active polysaccharide monooxygenase that oxidizes the C1 position of starch substrates, but not in cellulose, chitin, polygalacturonan or esterified pectin, nor with Arabidopsis stem cell walls. Catalysis by LPMOs requires the reduction of the active-site copper from Cu(II) to Cu(I) by a reducing agent and H(2)O(2) or O(2) as a cosubstrate. The sequence is that of AA13 family lytic polysaccharide monooxygenase aasA from Emericella nidulans (strain FGSC A4 / ATCC 38163 / CBS 112.46 / NRRL 194 / M139) (Aspergillus nidulans).